A 413-amino-acid chain; its full sequence is Serine hydroxymethyltransferase (413 aa).

(6S)-5,6,7,8-tetrahydrofolate is bound by residues Leu117 and 121-123 (GHL). Residue Lys226 is modified to N6-(pyridoxal phosphate)lysine. (6S)-5,6,7,8-tetrahydrofolate contacts are provided by residues Glu239 and 349 to 351 (SPF).

It belongs to the SHMT family. In terms of assembly, homodimer. Requires pyridoxal 5'-phosphate as cofactor.

It localises to the cytoplasm. The enzyme catalyses (6R)-5,10-methylene-5,6,7,8-tetrahydrofolate + glycine + H2O = (6S)-5,6,7,8-tetrahydrofolate + L-serine. Its pathway is one-carbon metabolism; tetrahydrofolate interconversion. The protein operates within amino-acid biosynthesis; glycine biosynthesis; glycine from L-serine: step 1/1. Functionally, catalyzes the reversible interconversion of serine and glycine with tetrahydrofolate (THF) serving as the one-carbon carrier. This reaction serves as the major source of one-carbon groups required for the biosynthesis of purines, thymidylate, methionine, and other important biomolecules. Also exhibits THF-independent aldolase activity toward beta-hydroxyamino acids, producing glycine and aldehydes, via a retro-aldol mechanism. The protein is Serine hydroxymethyltransferase of Bacillus anthracis (strain A0248).